The following is a 187-amino-acid chain: UPF0398 protein LJ_1195 (187 aa).

The protein belongs to the UPF0398 family.

The sequence is that of UPF0398 protein LJ_1195 from Lactobacillus johnsonii (strain CNCM I-12250 / La1 / NCC 533).